The primary structure comprises 739 residues: Catalase-peroxidase 2 (739 aa).

Residues 1-26 form the signal peptide; it reads MKKSTIPSMSALTLAMSLAFGGAAIA. The segment at residues 105–227 is a cross-link (tryptophyl-tyrosyl-methioninium (Trp-Tyr) (with M-253)); the sequence is WHSAGVYRIF…MGATQMGLIY (123 aa). Catalysis depends on H106, which acts as the Proton acceptor. Residues 227 to 253 constitute a cross-link (tryptophyl-tyrosyl-methioninium (Tyr-Met) (with W-105)); it reads YVNPEGPNGVPDPLASAKEIRDTFGRM. H268 contributes to the heme b binding site.

Belongs to the peroxidase family. Peroxidase/catalase subfamily. As to quaternary structure, homodimer or homotetramer. It depends on heme b as a cofactor. In terms of processing, formation of the three residue Trp-Tyr-Met cross-link is important for the catalase, but not the peroxidase activity of the enzyme.

It catalyses the reaction H2O2 + AH2 = A + 2 H2O. The catalysed reaction is 2 H2O2 = O2 + 2 H2O. Bifunctional enzyme with both catalase and broad-spectrum peroxidase activity. This Shewanella sp. (strain ANA-3) protein is Catalase-peroxidase 2.